We begin with the raw amino-acid sequence, 160 residues long: SsrA-binding protein (160 aa).

Belongs to the SmpB family.

Its subcellular location is the cytoplasm. In terms of biological role, required for rescue of stalled ribosomes mediated by trans-translation. Binds to transfer-messenger RNA (tmRNA), required for stable association of tmRNA with ribosomes. tmRNA and SmpB together mimic tRNA shape, replacing the anticodon stem-loop with SmpB. tmRNA is encoded by the ssrA gene; the 2 termini fold to resemble tRNA(Ala) and it encodes a 'tag peptide', a short internal open reading frame. During trans-translation Ala-aminoacylated tmRNA acts like a tRNA, entering the A-site of stalled ribosomes, displacing the stalled mRNA. The ribosome then switches to translate the ORF on the tmRNA; the nascent peptide is terminated with the 'tag peptide' encoded by the tmRNA and targeted for degradation. The ribosome is freed to recommence translation, which seems to be the essential function of trans-translation. This Escherichia coli O6:K15:H31 (strain 536 / UPEC) protein is SsrA-binding protein.